Reading from the N-terminus, the 335-residue chain is Large ribosomal subunit protein uL3 (335 aa).

Disordered regions lie at residues 1–35, 234–256, and 312–335; these read MPQP…ADDG, IGNL…GQTG, and AVRP…SNQG. The span at 244-256 shows a compositional bias: polar residues; sequence RVRSTVPQQGQTG.

This sequence belongs to the universal ribosomal protein uL3 family. In terms of assembly, part of the 50S ribosomal subunit. Forms a cluster with proteins L14 and L24e.

Functionally, one of the primary rRNA binding proteins, it binds directly near the 3'-end of the 23S rRNA, where it nucleates assembly of the 50S subunit. The chain is Large ribosomal subunit protein uL3 from Halobacterium salinarum (strain ATCC 29341 / DSM 671 / R1).